A 1192-amino-acid chain; its full sequence is Coiled-coil domain-containing protein 40 (1192 aa).

Disordered stretches follow at residues 1-78 (MMDA…PGMD), 126-153 (KAKHRKVRPQAEVESTGRAAPEGELEVS), 173-196 (SSPEVSYSDISPLEMGEDDTNVSA), 211-246 (EPIEPTEPPEPAEPPKPAETPEDSTVRAPAHPYQRD), and 261-289 (GSLTPSDTDDLPLETDEPPQQESVQSTPR). Over residues 27 to 45 (PETEVEFIGETAPDTDVEF) the composition is skewed to acidic residues. Residues 215–228 (PTEPPEPAEPPKPA) are compositionally biased toward pro residues. Residues 267-279 (DTDDLPLETDEPP) are compositionally biased toward acidic residues. Ser306 bears the Phosphoserine mark. 7 coiled-coil regions span residues 308 to 369 (EALL…ATKQ), 425 to 451 (KTCQTANEERKKLAALQTEVESLALHL), 581 to 649 (DSEI…MLNK), 733 to 768 (NTNCKIDMHKKTLAEMDKEVKRFNDLITNSESEIAR), 830 to 871 (LQQE…KIAH), 919 to 972 (LRTL…EMRS), and 1044 to 1118 (QQRE…IVTL).

Belongs to the CCDC40 family. In terms of tissue distribution, specifically expressed in the embryonic node and midline.

Its subcellular location is the cytoplasm. The protein resides in the cell projection. It localises to the cilium. Functionally, required for assembly of dynein regulatory complex (DRC) and inner dynein arm (IDA) complexes, which are responsible for ciliary beat regulation, thereby playing a central role in motility in cilia and flagella. Probably acts together with CCDC39 to form a molecular ruler that determines the 96 nanometer (nm) repeat length and arrangements of components in cilia and flagella. Not required for outer dynein arm complexes assembly. Required for axonemal recruitment of CCDC39. This chain is Coiled-coil domain-containing protein 40, found in Mus musculus (Mouse).